A 119-amino-acid chain; its full sequence is Holo-[acyl-carrier-protein] synthase (119 aa).

Residues Asp8 and Glu50 each coordinate Mg(2+).

The protein belongs to the P-Pant transferase superfamily. AcpS family. It depends on Mg(2+) as a cofactor.

Its subcellular location is the cytoplasm. The enzyme catalyses apo-[ACP] + CoA = holo-[ACP] + adenosine 3',5'-bisphosphate + H(+). Transfers the 4'-phosphopantetheine moiety from coenzyme A to a Ser of acyl-carrier-protein. The sequence is that of Holo-[acyl-carrier-protein] synthase from Clavibacter michiganensis subsp. michiganensis (strain NCPPB 382).